A 1374-amino-acid chain; its full sequence is Probable multidrug resistance-associated protein lethal(2)03659 (1374 aa).

The tract at residues 1 to 40 (MDKQPVLEPTFDSVSERENTSIEESSLLENNGFDHRNKDE) is disordered. The next 6 membrane-spanning stretches (helical) occupy residues 159–179 (LLRVFGWQLGFPGLAIFVVEL), 205–225 (AGFYYAVAQIVISALTVMILT), 282–302 (YTVHYLWVGPLQVLVITYLMY), 305–325 (IGISAVFGVLFMLLFMPIQMY), 404–424 (IFLSLVGYVILGKVFTPEIAF), and 426–446 (ITAYYNVLLAAMSIYVPSAII). Residues 168 to 449 (GFPGLAIFVV…YVPSAIIQTA (282 aa)) form the ABC transmembrane type-1 1 domain. Positions 466–492 (ELGSSDKSEGPSKDTVPGNPPSNNNEA) are disordered. The 224-residue stretch at 499-722 (ISIRDLKAKW…GLITGLGSLS (224 aa)) folds into the ABC transporter 1 domain. Position 534–541 (534–541 (GLTGSGKS)) interacts with ATP. Asparagine 561 carries N-linked (GlcNAc...) asparagine glycosylation. The tract at residues 723–766 (KTDKAKTEEQEPLNLNSPDNKNEVTPIKENSEQTVGGSSSGKEH) is disordered. The next 5 membrane-spanning stretches (helical) occupy residues 787-807 (GGGLVAFLVMLSSSVLAQVAV), 845-865 (LIIILSVIMNLSSSFLLFNIA), 913-933 (VVLVDVMQIALWLAGIIIVIA), 938-958 (LLLVPTLMLSVIFYHLRNLYL), and 1025-1045 (YCMNCICVIYISIITLSFFAF). Residues 793–1079 (FLVMLSSSVL…GVRQTAELEN (287 aa)) form the ABC transmembrane type-1 2 domain. One can recognise an ABC transporter 2 domain in the interval 1119–1352 (FKELNLRYTP…SDSKVFHNLV (234 aa)). 1153–1160 (GRTGAGKS) serves as a coordination point for ATP. N-linked (GlcNAc...) asparagine glycans are attached at residues asparagine 1254 and asparagine 1353.

This sequence belongs to the ABC transporter superfamily. ABCC family. Conjugate transporter (TC 3.A.1.208) subfamily. Uniform expression in embryos.

It localises to the membrane. Vital for development. The protein is Probable multidrug resistance-associated protein lethal(2)03659 (l(2)03659) of Drosophila melanogaster (Fruit fly).